Reading from the N-terminus, the 144-residue chain is Intraflagellar transport protein 25 homolog (144 aa).

3 residues coordinate Ca(2+): Asn-29, Asp-32, and Thr-37.

It belongs to the IFT25 family. In terms of assembly, component of the IFT complex B, at least composed of IFT20, IFT22, IFT25, IFT27, IFT46, IFT52, TRAF3IP1/IFT54, IFT57, IFT74, IFT80, IFT81, and IFT88. Interacts with IFT27. Interacts with IFT88. As to expression, detected in placenta.

Its subcellular location is the cell projection. The protein localises to the cilium. Functionally, component of the IFT complex B required for sonic hedgehog/SHH signaling. May mediate transport of SHH components: required for the export of SMO and PTCH1 receptors out of the cilium and the accumulation of GLI2 at the ciliary tip in response to activation of the SHH pathway, suggesting it is involved in the dynamic transport of SHH signaling molecules within the cilium. Not required for ciliary assembly. Its role in intraflagellar transport is mainly seen in tissues rich in ciliated cells such as kidney and testis. Essential for male fertility, spermiogenesis and sperm flagella formation. Plays a role in the early development of the kidney. May be involved in the regulation of ureteric bud initiation. This Homo sapiens (Human) protein is Intraflagellar transport protein 25 homolog.